The chain runs to 811 residues: G-type lectin S-receptor-like serine/threonine-protein kinase LECRK2 (811 aa).

The N-terminal stretch at 1–23 (MAPILFLPILQILLIYCTKSAQA) is a signal peptide. The 130-residue stretch at 24–153 (QLNISIGSSL…DGATKWESFG (130 aa)) folds into the Bulb-type lectin domain. The Extracellular portion of the chain corresponds to 24–464 (QLNISIGSSL…DKKYWILGSS (441 aa)). Residues Asn-26, Asn-39, Asn-59, Asn-219, Asn-226, Asn-237, and Asn-242 are each glycosylated (N-linked (GlcNAc...) asparagine). One can recognise an EGF-like; atypical domain in the interval 292-344 (PENICQTIQTKVGSGACGFNSYCTFDGTKNTTNCLCPQRYKFFDNERTYKGCR). Cystine bridges form between Cys-296–Cys-314, Cys-308–Cys-325, Cys-327–Cys-343, Cys-389–Cys-411, and Cys-393–Cys-399. Asn-321 carries an N-linked (GlcNAc...) asparagine glycan. The PAN domain occupies 352–436 (CDLDETAAMV…LQATVLLKVP (85 aa)). The chain crosses the membrane as a helical span at residues 465-485 (LFFGSSVLVNFLLIFVLLFGT). Over 486 to 811 (YCSITSRKKT…DPSSYISSLA (326 aa)) the chain is Cytoplasmic. Residues 521–795 (GGFHEVLGTG…KVMQMLDGAV (275 aa)) form the Protein kinase domain. ATP contacts are provided by residues 527-535 (LGTGASGIV) and Lys-551. The active-site Proton acceptor is Asp-645.

Belongs to the protein kinase superfamily. Ser/Thr protein kinase family.

The protein resides in the membrane. The catalysed reaction is L-seryl-[protein] + ATP = O-phospho-L-seryl-[protein] + ADP + H(+). It carries out the reaction L-threonyl-[protein] + ATP = O-phospho-L-threonyl-[protein] + ADP + H(+). Involved in resistance against the herbivorous insect brown planthopper (N.lugens, BPH). Member of the BPH3 (BPH resistance locus 3) cluster which contains LECRK1, LECRK2 and LECRK3. The protein is G-type lectin S-receptor-like serine/threonine-protein kinase LECRK2 of Oryza sativa subsp. indica (Rice).